The primary structure comprises 275 residues: Echotoxin-2 (275 aa).

The signal sequence occupies residues methionine 1–serine 23. Positions serine 23–leucine 32 are plays an important role in the hemolytic activity. An N-terminal region region spans residues glutamate 49–serine 67. Positions 123, 141, 143, 176, and 177 each coordinate phosphocholine. A trp-rich region, which is important for the binding to lipid membrane region spans residues serine 141–glycine 156. A propeptide spanning residues arginine 249–lysine 275 is cleaved from the precursor.

Belongs to the actinoporin family. Sea anemone subfamily. In terms of assembly, octamer or nonamer in membranes. Monomer in the soluble state. Salivary gland.

It is found in the secreted. Its subcellular location is the nematocyst. The protein localises to the target cell membrane. Functionally, pore-forming protein that forms cations-selective hydrophilic pores of around 1 nm and causes cardiac stimulation and cytolysis. Pore formation is a multi-step process that involves specific recognition of membrane sphingomyelin (but neither cholesterol nor phosphatidylcholine) using aromatic rich region and adjacent phosphocholine (POC) binding site, firm binding to the membrane (mainly driven by hydrophobic interactions) accompanied by the transfer of the N-terminal region to the lipid-water interface and finally pore formation after oligomerization of monomers. Exhibits both hemolytic and lethal activities. Gangliosides potently inhibits the hemolytic activity. The protein is Echotoxin-2 of Monoplex parthenopeus (Giant triton).